Consider the following 231-residue polypeptide: Lactate utilization protein C (231 aa).

The protein belongs to the LutC/YkgG family.

Is involved in L-lactate degradation and allows cells to grow with lactate as the sole carbon source. In Macrococcus caseolyticus (strain JCSC5402) (Macrococcoides caseolyticum), this protein is Lactate utilization protein C.